A 583-amino-acid polypeptide reads, in one-letter code: Secretogranin-2b (583 aa).

The first 28 residues, 1–28, serve as a signal peptide directing secretion; the sequence is MMLSLPKLSAGGVVVLLATLLHTLTVQG. Disordered regions lie at residues 123–159 and 526–583; these read AGES…AGFV and VDNG…VAGM. Residues 534–546 show a composition bias toward basic and acidic residues; sequence AKRDTQGKEEPEG.

Belongs to the chromogranin/secretogranin protein family.

Its subcellular location is the secreted. In terms of biological role, neuroendocrine protein of the granin family that regulates the biogenesis of secretory granules. Required for neurovascular modeling of the hindbrain. Acts in a non-cell autonomous manner and is required for migration and proliferation of central artery endothelial cells. Required for normal courting behavior and spawning. This Danio rerio (Zebrafish) protein is Secretogranin-2b.